Reading from the N-terminus, the 266-residue chain is Undecaprenyl-diphosphatase (266 aa).

Helical transmembrane passes span 1–21, 39–59, 87–107, 111–131, 149–169, 183–203, 218–238, and 246–266; these read MDTFQVIILALIQGLTEFLPI, QGLSFDVAVNTGSLFAVVIYF, WWIILATLPAVFFGFIAKDFI, LRSAGVIAVTTIVFGLLLWWA, ALLIGFAQALALIPGTSRSGA, AAARFSFLMSVPVSLGAAILV, ALTLGTVISFVAAYLCIHYFL, and MTPFVIYRLILGAVLCGFIFL.

Belongs to the UppP family.

It localises to the cell inner membrane. It carries out the reaction di-trans,octa-cis-undecaprenyl diphosphate + H2O = di-trans,octa-cis-undecaprenyl phosphate + phosphate + H(+). Catalyzes the dephosphorylation of undecaprenyl diphosphate (UPP). Confers resistance to bacitracin. The chain is Undecaprenyl-diphosphatase from Shewanella sp. (strain MR-4).